Consider the following 376-residue polypeptide: NifS-like protein (376 aa).

Residues 58-59 (SE) and 184-186 (SLN) each bind pyridoxal 5'-phosphate.

It belongs to the class-V pyridoxal-phosphate-dependent aminotransferase family. NifS/IscS subfamily. It depends on pyridoxal 5'-phosphate as a cofactor.

Its subcellular location is the virion. The polypeptide is NifS-like protein (African swine fever virus (isolate Tick/Malawi/Lil 20-1/1983) (ASFV)).